Here is a 267-residue protein sequence, read N- to C-terminus: Distal basal body ring component protein (267 aa).

Positions 1–29 are cleaved as a signal peptide; the sequence is MKAFLFAAAATLVITALSAPAFAGTPVTL.

As to quaternary structure, flaD is a subunit of the flagellar transenvelope basal body.

The protein resides in the periplasm. It localises to the bacterial flagellum basal body. In terms of biological role, flaD might be the structural protein of the distal basal body ring P, or it is necessary for the assembly of the P ring. This Caulobacter vibrioides (strain ATCC 19089 / CIP 103742 / CB 15) (Caulobacter crescentus) protein is Distal basal body ring component protein (flaD).